Consider the following 1859-residue polypeptide: DNA-directed RNA polymerase subunit beta'' (1859 aa).

Residues C286, C359, C366, and C369 each coordinate Zn(2+).

Belongs to the RNA polymerase beta' chain family. RpoC2 subfamily. As to quaternary structure, in plastids the minimal PEP RNA polymerase catalytic core is composed of four subunits: alpha, beta, beta', and beta''. When a (nuclear-encoded) sigma factor is associated with the core the holoenzyme is formed, which can initiate transcription. The cofactor is Zn(2+).

It localises to the plastid. The protein localises to the chloroplast. The catalysed reaction is RNA(n) + a ribonucleoside 5'-triphosphate = RNA(n+1) + diphosphate. Functionally, DNA-dependent RNA polymerase catalyzes the transcription of DNA into RNA using the four ribonucleoside triphosphates as substrates. The sequence is that of DNA-directed RNA polymerase subunit beta'' from Oltmannsiellopsis viridis (Marine flagellate).